Consider the following 400-residue polypeptide: Enoyl-[acyl-carrier-protein] reductase [NADH] (400 aa).

NAD(+) is bound by residues 48–53 (GASTGY), 74–75 (FE), 111–112 (DA), and 139–140 (LA). Residue Tyr225 coordinates substrate. Tyr235 functions as the Proton donor in the catalytic mechanism. Residues Lys244 and 273-275 (VVT) each bind NAD(+).

This sequence belongs to the TER reductase family. Monomer.

The enzyme catalyses a 2,3-saturated acyl-[ACP] + NAD(+) = a (2E)-enoyl-[ACP] + NADH + H(+). It participates in lipid metabolism; fatty acid biosynthesis. Functionally, involved in the final reduction of the elongation cycle of fatty acid synthesis (FAS II). Catalyzes the reduction of a carbon-carbon double bond in an enoyl moiety that is covalently linked to an acyl carrier protein (ACP). This is Enoyl-[acyl-carrier-protein] reductase [NADH] from Burkholderia multivorans (strain ATCC 17616 / 249).